We begin with the raw amino-acid sequence, 294 residues long: NAD kinase (294 aa).

Asp74 (proton acceptor) is an active-site residue. NAD(+) contacts are provided by residues 74 to 75, Arg79, 149 to 150, Asp179, 190 to 195, and Ala214; these read DG, NE, and TGYSLS.

This sequence belongs to the NAD kinase family. A divalent metal cation is required as a cofactor.

The protein localises to the cytoplasm. The enzyme catalyses NAD(+) + ATP = ADP + NADP(+) + H(+). In terms of biological role, involved in the regulation of the intracellular balance of NAD and NADP, and is a key enzyme in the biosynthesis of NADP. Catalyzes specifically the phosphorylation on 2'-hydroxyl of the adenosine moiety of NAD to yield NADP. In Flavobacterium johnsoniae (strain ATCC 17061 / DSM 2064 / JCM 8514 / BCRC 14874 / CCUG 350202 / NBRC 14942 / NCIMB 11054 / UW101) (Cytophaga johnsonae), this protein is NAD kinase.